A 941-amino-acid polypeptide reads, in one-letter code: RNA-directed RNA polymerase (941 aa).

The interval 875–918 is disordered; the sequence is SARQGGMGLPPPPPPPLGGGGMAGPPPPPFMGLRPESSVPTSVP. Low complexity predominate over residues 905–918; sequence MGLRPESSVPTSVP.

Forms a ribonucleoprotein complex with the 23S RNA, where a single polymerase molecule binds to a single viral RNA genome. Since the viral RNA is not encapsidated, ribonucleoprotein complex formation appears to be the strategy to survive in the host as persistent virus.

The protein localises to the host cytoplasm. The enzyme catalyses RNA(n) + a ribonucleoside 5'-triphosphate = RNA(n+1) + diphosphate. RNA-directed RNA polymerase that replicates the viral (+) and (-) genome. This is RNA-directed RNA polymerase from Saccharomyces 23S RNA narnavirus (ScNV-23S).